The primary structure comprises 241 residues: 3-deoxy-manno-octulosonate cytidylyltransferase (241 aa).

It belongs to the KdsB family.

The protein localises to the cytoplasm. It catalyses the reaction 3-deoxy-alpha-D-manno-oct-2-ulosonate + CTP = CMP-3-deoxy-beta-D-manno-octulosonate + diphosphate. It participates in nucleotide-sugar biosynthesis; CMP-3-deoxy-D-manno-octulosonate biosynthesis; CMP-3-deoxy-D-manno-octulosonate from 3-deoxy-D-manno-octulosonate and CTP: step 1/1. The protein operates within bacterial outer membrane biogenesis; lipopolysaccharide biosynthesis. In terms of biological role, activates KDO (a required 8-carbon sugar) for incorporation into bacterial lipopolysaccharide in Gram-negative bacteria. This chain is 3-deoxy-manno-octulosonate cytidylyltransferase, found in Rickettsia rickettsii (strain Sheila Smith).